Consider the following 176-residue polypeptide: Immunity factor for TNT homolog (176 aa).

As to quaternary structure, interacts with the tuberculosis necrotizing toxin (TNT) homolog, the C-terminal domain of the outer membrane channel protein CpnT.

Its function is as follows. Antitoxin for tuberculosis necrotizing toxin (TNT) homolog. Acts by binding directly to TNT, which inhibits NAD(+) glycohydrolase activity of TNT and protects M.bovis from self-poisoning. This chain is Immunity factor for TNT homolog, found in Mycobacterium bovis (strain BCG / Pasteur 1173P2).